The chain runs to 208 residues: Ribosomal RNA large subunit methyltransferase E (208 aa).

S-adenosyl-L-methionine contacts are provided by glycine 61, tryptophan 63, aspartate 81, aspartate 97, and aspartate 122. Catalysis depends on lysine 162, which acts as the Proton acceptor.

This sequence belongs to the class I-like SAM-binding methyltransferase superfamily. RNA methyltransferase RlmE family.

It is found in the cytoplasm. The enzyme catalyses uridine(2552) in 23S rRNA + S-adenosyl-L-methionine = 2'-O-methyluridine(2552) in 23S rRNA + S-adenosyl-L-homocysteine + H(+). Its function is as follows. Specifically methylates the uridine in position 2552 of 23S rRNA at the 2'-O position of the ribose in the fully assembled 50S ribosomal subunit. The sequence is that of Ribosomal RNA large subunit methyltransferase E from Pseudomonas putida (strain GB-1).